The sequence spans 627 residues: Membrane protein insertase YidC (627 aa).

The helical transmembrane segment at 8–28 threads the bilayer; that stretch reads LFLALILSMGIWMGVNYFFFP. Over residues 33–57 the composition is skewed to polar residues; that stretch reads KKNTETKQTQSDKTSENTKQQITSG. A disordered region spans residues 33–68; the sequence is KKNTETKQTQSDKTSENTKQQITSGKTKESNSADPV. Residues 58–68 show a composition bias toward basic and acidic residues; the sequence is KTKESNSADPV. 4 helical membrane passes run 417-437, 488-508, 536-556, and 575-595; these read FTIP…KLVF, VGGC…YTAF, AIPY…LMVG, and MLMY…PSGV.

It belongs to the OXA1/ALB3/YidC family. Type 1 subfamily. Interacts with the Sec translocase complex via SecD. Specifically interacts with transmembrane segments of nascent integral membrane proteins during membrane integration.

The protein resides in the cell inner membrane. Its function is as follows. Required for the insertion and/or proper folding and/or complex formation of integral membrane proteins into the membrane. Involved in integration of membrane proteins that insert both dependently and independently of the Sec translocase complex, as well as at least some lipoproteins. Aids folding of multispanning membrane proteins. This chain is Membrane protein insertase YidC, found in Leptospira interrogans serogroup Icterohaemorrhagiae serovar copenhageni (strain Fiocruz L1-130).